The following is a 123-amino-acid chain: UPF0102 protein PSEEN4497 (123 aa).

The protein belongs to the UPF0102 family.

This Pseudomonas entomophila (strain L48) protein is UPF0102 protein PSEEN4497.